A 388-amino-acid polypeptide reads, in one-letter code: MTNINRIGLTWISFLSYAFTGALVVVTGMIMGNISNYFHLSISQMSNIFTFLNAGILVSIFINSWLIEIISLKKQLIFSFILTIIAVIGIVLCNSIFLFSINMFILGLVSGITMSIGTFIITHLYSGSKRGSLLLLTDSFFSMSGMIFPIVTAYLLEKKIIWYWSYICIGAIYLLIFLLTINSSFEKFKTNTKNSKETKEKWNFNVFLLSISALLYILGQLGFISWVPQYATEIMNIDIKKTGSLVSGFWMSYMLGMWFFSFIIKFFNLYRMFIFLTSMSTILMYCFIKSENFLNQQYIIISLGFFSSAIYTIIITLASLQTKHPSPKLINLILLFGTIGTFLTFIITSPIVEAKGLYVTLISSNILYGIVFFLSILIYFNKKYERVI.

12 consecutive transmembrane segments (helical) span residues 11–31 (WISFLSYAFTGALVVVTGMIM), 50–70 (TFLNAGILVSIFINSWLIEII), 77–97 (IFSFILTIIAVIGIVLCNSIF), 101–121 (INMFILGLVSGITMSIGTFII), 133–153 (LLLLTDSFFSMSGMIFPIVTA), 160–180 (IIWYWSYICIGAIYLLIFLLT), 206–226 (VFLLSISALLYILGQLGFISW), 244–264 (SLVSGFWMSYMLGMWFFSFII), 268–288 (NLYRMFIFLTSMSTILMYCFI), 298–318 (YIIISLGFFSSAIYTIIITLA), 332–352 (LILLFGTIGTFLTFIITSPIV), and 360–380 (TLISSNILYGIVFFLSILIYF).

It belongs to the major facilitator superfamily. TsgA family.

It is found in the cell membrane. The protein is Protein TsgA homolog of Buchnera aphidicola subsp. Acyrthosiphon pisum (strain 5A).